Consider the following 129-residue polypeptide: Large ribosomal subunit protein uL22 (129 aa).

It belongs to the universal ribosomal protein uL22 family. Part of the 50S ribosomal subunit.

In terms of biological role, this protein binds specifically to 23S rRNA; its binding is stimulated by other ribosomal proteins, e.g. L4, L17, and L20. It is important during the early stages of 50S assembly. It makes multiple contacts with different domains of the 23S rRNA in the assembled 50S subunit and ribosome. Its function is as follows. The globular domain of the protein is located near the polypeptide exit tunnel on the outside of the subunit, while an extended beta-hairpin is found that lines the wall of the exit tunnel in the center of the 70S ribosome. The chain is Large ribosomal subunit protein uL22 from Bartonella quintana (strain Toulouse) (Rochalimaea quintana).